Here is a 200-residue protein sequence, read N- to C-terminus: NAD(P)H dehydrogenase (quinone) (200 aa).

The 188-residue stretch at 4–191 folds into the Flavodoxin-like domain; the sequence is ILVLYHSLWG…TIARFQGRHV (188 aa). FMN-binding positions include 10 to 15 and 79 to 81; these read SLWGHV and TRF. Tryptophan 12 is an NAD(+) binding site. Tryptophan 99 is a substrate binding site. Residues 114–120 and histidine 135 contribute to the FMN site; that span reads STATQHG.

This sequence belongs to the WrbA family. Requires FMN as cofactor.

It catalyses the reaction a quinone + NADH + H(+) = a quinol + NAD(+). The catalysed reaction is a quinone + NADPH + H(+) = a quinol + NADP(+). This chain is NAD(P)H dehydrogenase (quinone), found in Acidithiobacillus ferrooxidans (strain ATCC 53993 / BNL-5-31) (Leptospirillum ferrooxidans (ATCC 53993)).